Reading from the N-terminus, the 228-residue chain is UPF0173 metal-dependent hydrolase lmo1577 (228 aa).

Belongs to the UPF0173 family.

The chain is UPF0173 metal-dependent hydrolase lmo1577 from Listeria monocytogenes serovar 1/2a (strain ATCC BAA-679 / EGD-e).